A 158-amino-acid chain; its full sequence is SsrA-binding protein (158 aa).

Belongs to the SmpB family.

The protein localises to the cytoplasm. Functionally, required for rescue of stalled ribosomes mediated by trans-translation. Binds to transfer-messenger RNA (tmRNA), required for stable association of tmRNA with ribosomes. tmRNA and SmpB together mimic tRNA shape, replacing the anticodon stem-loop with SmpB. tmRNA is encoded by the ssrA gene; the 2 termini fold to resemble tRNA(Ala) and it encodes a 'tag peptide', a short internal open reading frame. During trans-translation Ala-aminoacylated tmRNA acts like a tRNA, entering the A-site of stalled ribosomes, displacing the stalled mRNA. The ribosome then switches to translate the ORF on the tmRNA; the nascent peptide is terminated with the 'tag peptide' encoded by the tmRNA and targeted for degradation. The ribosome is freed to recommence translation, which seems to be the essential function of trans-translation. This is SsrA-binding protein from Symbiobacterium thermophilum (strain DSM 24528 / JCM 14929 / IAM 14863 / T).